The chain runs to 90 residues: uncharacterized protein (90 aa).

The first 26 residues, 1–26 (MFESEAELRRIRIALVWIAVFLLFGA), serve as a signal peptide directing secretion.

This is an uncharacterized protein from Bacillus subtilis (strain 168).